The following is a 341-amino-acid chain: GTP 3',8-cyclase (341 aa).

A Radical SAM core domain is found at 17 to 235; that stretch reads TYGRVATDLR…LRTRFELTAE (219 aa). Arg26 contacts GTP. Residues Cys33 and Cys37 each contribute to the [4Fe-4S] cluster site. Tyr39 contacts S-adenosyl-L-methionine. Cys40 provides a ligand contact to [4Fe-4S] cluster. Position 77 (Arg77) interacts with GTP. Gly81 contributes to the S-adenosyl-L-methionine binding site. Thr108 lines the GTP pocket. Ser132 serves as a coordination point for S-adenosyl-L-methionine. Lys169 contacts GTP. Met203 provides a ligand contact to S-adenosyl-L-methionine. Residues Cys268 and Cys271 each coordinate [4Fe-4S] cluster. 273–275 is a GTP binding site; that stretch reads RTR. Cys285 is a binding site for [4Fe-4S] cluster.

Belongs to the radical SAM superfamily. MoaA family. Monomer and homodimer. [4Fe-4S] cluster is required as a cofactor.

The catalysed reaction is GTP + AH2 + S-adenosyl-L-methionine = (8S)-3',8-cyclo-7,8-dihydroguanosine 5'-triphosphate + 5'-deoxyadenosine + L-methionine + A + H(+). Its pathway is cofactor biosynthesis; molybdopterin biosynthesis. Its function is as follows. Catalyzes the cyclization of GTP to (8S)-3',8-cyclo-7,8-dihydroguanosine 5'-triphosphate. This is GTP 3',8-cyclase from Streptomyces coelicolor (strain ATCC BAA-471 / A3(2) / M145).